The chain runs to 345 residues: D-erythrose-4-phosphate dehydrogenase (345 aa).

11–12 (RI) is a binding site for NAD(+). Substrate-binding positions include 158–160 (SCT), R204, 217–218 (TK), and R240. C159 serves as the catalytic Nucleophile. Residue N322 coordinates NAD(+).

The protein belongs to the glyceraldehyde-3-phosphate dehydrogenase family. Epd subfamily. In terms of assembly, homotetramer.

It localises to the cytoplasm. It carries out the reaction D-erythrose 4-phosphate + NAD(+) + H2O = 4-phospho-D-erythronate + NADH + 2 H(+). The protein operates within cofactor biosynthesis; pyridoxine 5'-phosphate biosynthesis; pyridoxine 5'-phosphate from D-erythrose 4-phosphate: step 1/5. Catalyzes the NAD-dependent conversion of D-erythrose 4-phosphate to 4-phosphoerythronate. The polypeptide is D-erythrose-4-phosphate dehydrogenase (Vibrio campbellii (strain ATCC BAA-1116)).